The sequence spans 250 residues: Leucyl/phenylalanyl-tRNA--protein transferase (250 aa).

It belongs to the L/F-transferase family.

It localises to the cytoplasm. The enzyme catalyses N-terminal L-lysyl-[protein] + L-leucyl-tRNA(Leu) = N-terminal L-leucyl-L-lysyl-[protein] + tRNA(Leu) + H(+). The catalysed reaction is N-terminal L-arginyl-[protein] + L-leucyl-tRNA(Leu) = N-terminal L-leucyl-L-arginyl-[protein] + tRNA(Leu) + H(+). It carries out the reaction L-phenylalanyl-tRNA(Phe) + an N-terminal L-alpha-aminoacyl-[protein] = an N-terminal L-phenylalanyl-L-alpha-aminoacyl-[protein] + tRNA(Phe). Its function is as follows. Functions in the N-end rule pathway of protein degradation where it conjugates Leu, Phe and, less efficiently, Met from aminoacyl-tRNAs to the N-termini of proteins containing an N-terminal arginine or lysine. This Cupriavidus necator (strain ATCC 17699 / DSM 428 / KCTC 22496 / NCIMB 10442 / H16 / Stanier 337) (Ralstonia eutropha) protein is Leucyl/phenylalanyl-tRNA--protein transferase.